The sequence spans 684 residues: Fidgetin-like protein 2 (684 aa).

The span at 27-41 (PEQHLDVSSTTSSPA) shows a compositional bias: polar residues. Disordered regions lie at residues 27 to 48 (PEQH…ELYS), 99 to 179 (PGAF…PHSS), and 292 to 403 (LDEE…SDPM). The span at 160–179 (SNLSDSGYSGSSSCSGPHSS) shows a compositional bias: low complexity. Alanine 431 contacts ATP.

This sequence belongs to the AAA ATPase family. It depends on Mg(2+) as a cofactor. Highly expressed in vascular endothelial cells and neuronal cells.

The protein localises to the cytoplasm. Its subcellular location is the cell cortex. The enzyme catalyses ATP + H2O = ADP + phosphate + H(+). In terms of biological role, microtubule-severing enzyme that negatively regulates cell migration and wound healing. In migrating cells, targets dynamic microtubules (MTs) at the leading edge and severs them, thereby suppressing motility. Negative regulator of axon regeneration that suppresses axonal growth by selectively severing dynamic MTs in the distal axon shaft and growth cone. Contributes to proper cell branching during endothelial and neuronal development. In Danio rerio (Zebrafish), this protein is Fidgetin-like protein 2 (fignl2).